A 90-amino-acid polypeptide reads, in one-letter code: Probable Fe(2+)-trafficking protein (90 aa).

It belongs to the Fe(2+)-trafficking protein family.

Functionally, could be a mediator in iron transactions between iron acquisition and iron-requiring processes, such as synthesis and/or repair of Fe-S clusters in biosynthetic enzymes. This is Probable Fe(2+)-trafficking protein from Haemophilus influenzae (strain 86-028NP).